Here is a 157-residue protein sequence, read N- to C-terminus: 6,7-dimethyl-8-ribityllumazine synthase (157 aa).

5-amino-6-(D-ribitylamino)uracil contacts are provided by residues Phe-22, Ala-56–Glu-58, and Ala-80–Val-82. Glu-85–Thr-86 provides a ligand contact to (2S)-2-hydroxy-3-oxobutyl phosphate. Residue His-88 is the Proton donor of the active site. Position 113 (Phe-113) interacts with 5-amino-6-(D-ribitylamino)uracil. Arg-127 provides a ligand contact to (2S)-2-hydroxy-3-oxobutyl phosphate.

This sequence belongs to the DMRL synthase family.

The enzyme catalyses (2S)-2-hydroxy-3-oxobutyl phosphate + 5-amino-6-(D-ribitylamino)uracil = 6,7-dimethyl-8-(1-D-ribityl)lumazine + phosphate + 2 H2O + H(+). The protein operates within cofactor biosynthesis; riboflavin biosynthesis; riboflavin from 2-hydroxy-3-oxobutyl phosphate and 5-amino-6-(D-ribitylamino)uracil: step 1/2. Catalyzes the formation of 6,7-dimethyl-8-ribityllumazine by condensation of 5-amino-6-(D-ribitylamino)uracil with 3,4-dihydroxy-2-butanone 4-phosphate. This is the penultimate step in the biosynthesis of riboflavin. This chain is 6,7-dimethyl-8-ribityllumazine synthase, found in Levilactobacillus brevis (strain ATCC 367 / BCRC 12310 / CIP 105137 / JCM 1170 / LMG 11437 / NCIMB 947 / NCTC 947) (Lactobacillus brevis).